Consider the following 326-residue polypeptide: MNRHADVPVIDISGLSGNDMDVKKDIAARIDRACRGSGFFYAANHGVDLAALQKFTTDWHMAMSPEEKWELAIRAYNPANPRNRNGYYMAVEGKKANESFCYLNPSFDADHATIKAGLPSHEVNIWPDEARHPGMRRFYEAYFSDVFDVAAVILRGFAIALGREESFFERHFSMDDTLSAVSLIRYPFLENYPPLKLGPDGEKLSFEHHQDVSLITVLYQTAIPNLQVETAEGYLDIPVSDEHFLVNCGTYMAHITNGYYPAPVHRVKYINAERLSIPFFANLSHASAIDPFAPPPYAPARGNPTVSYGDYLQHGLLDLIRANGQT.

Residues R84, Y88, and Y186 each coordinate isopenicillin N. N-[(5S)-5-amino-5-carboxypentanoyl]-L-cysteinyl-D-valine-binding residues include R84, Y88, Y186, H209, and D211. Residues 183 to 283 enclose the Fe2OG dioxygenase domain; that stretch reads LIRYPFLENY…RLSIPFFANL (101 aa). Fe(2+) contacts are provided by H209, D211, and H265. Position 274 (R274) interacts with 2-oxoglutarate. Residue S276 coordinates isopenicillin N. S276 provides a ligand contact to N-[(5S)-5-amino-5-carboxypentanoyl]-L-cysteinyl-D-valine.

This sequence belongs to the iron/ascorbate-dependent oxidoreductase family. Requires Fe cation as cofactor. L-ascorbate is required as a cofactor.

The catalysed reaction is N-[(5S)-5-amino-5-carboxypentanoyl]-L-cysteinyl-D-valine + O2 = isopenicillin N + 2 H2O. Its pathway is antibiotic biosynthesis; penicillin G biosynthesis; penicillin G from L-alpha-aminoadipate and L-cysteine and L-valine: step 2/3. Removes, in the presence of oxygen, 4 hydrogen atoms from delta-L-(alpha-aminoadipyl)-L-cysteinyl-D-valine (ACV) to form the azetidinone and thiazolidine rings of isopenicillin. The sequence is that of Isopenicillin N synthase (pcbC) from Lysobacter lactamgenus.